Reading from the N-terminus, the 210-residue chain is Large ribosomal subunit protein uL3 (210 aa).

Residues 132–144 show a composition bias toward basic residues; sequence GPMKHGSKYHRRP. Positions 132-152 are disordered; sequence GPMKHGSKYHRRPGSAGAKGP.

Belongs to the universal ribosomal protein uL3 family. Part of the 50S ribosomal subunit. Forms a cluster with proteins L14 and L19.

Functionally, one of the primary rRNA binding proteins, it binds directly near the 3'-end of the 23S rRNA, where it nucleates assembly of the 50S subunit. This chain is Large ribosomal subunit protein uL3, found in Heliobacterium modesticaldum (strain ATCC 51547 / Ice1).